The chain runs to 223 residues: von Willebrand factor C domain-containing protein 2-like (223 aa).

The N-terminal stretch at methionine 1–proline 21 is a signal peptide. 2 VWFC domains span residues lysine 51 to lysine 110 and asparagine 114 to lysine 172.

It is found in the secreted. The protein localises to the synapse. In terms of biological role, may play a role in bone differentiation and matrix mineralization. May play a role in neural development. The chain is von Willebrand factor C domain-containing protein 2-like (vwc2l) from Danio rerio (Zebrafish).